Consider the following 61-residue polypeptide: Small ribosomal subunit protein uS14 (61 aa).

Residues C24, C27, C40, and C43 each coordinate Zn(2+).

Belongs to the universal ribosomal protein uS14 family. Zinc-binding uS14 subfamily. As to quaternary structure, part of the 30S ribosomal subunit. Contacts proteins S3 and S10. The cofactor is Zn(2+).

Its function is as follows. Binds 16S rRNA, required for the assembly of 30S particles and may also be responsible for determining the conformation of the 16S rRNA at the A site. The protein is Small ribosomal subunit protein uS14 of Pelobacter propionicus (strain DSM 2379 / NBRC 103807 / OttBd1).